Reading from the N-terminus, the 573-residue chain is Myrcene synthase TPS5FN (573 aa).

(2E)-geranyl diphosphate-binding residues include Arg286, Asp323, Asp327, Arg464, and Asp467. 2 residues coordinate Mg(2+): Asp323 and Asp327. Residues 323 to 327 (DDIFD) carry the DDXXD motif motif. Mg(2+)-binding residues include Asp467, Thr471, and Glu475.

The protein belongs to the terpene synthase family. Tpsb subfamily. It depends on Mg(2+) as a cofactor. Mn(2+) is required as a cofactor. In terms of tissue distribution, expressed in glandular trichomes two to four weeks after flowering onset.

It carries out the reaction (2E)-geranyl diphosphate = beta-myrcene + diphosphate. The catalysed reaction is (2E)-geranyl diphosphate = (1R,5R)-alpha-pinene + diphosphate. It catalyses the reaction (2E)-geranyl diphosphate = sabinene + diphosphate. The enzyme catalyses (2E)-geranyl diphosphate = (4S)-limonene + diphosphate. It carries out the reaction (2E)-geranyl diphosphate = terpinolene + diphosphate. The catalysed reaction is (2E)-geranyl diphosphate = camphene + diphosphate. Its pathway is secondary metabolite biosynthesis; terpenoid biosynthesis. Its function is as follows. Involved in monoterpene (C10) olefins biosynthesis, constituants of cannabinoids and terpenoids-rich resins. Catalyzes mainly the conversion of (2E)-geranyl diphosphate to beta-myrcene, and also produces minor products such as alpha-pinene, camphene, sabinene, limonene and terpinolene. The chain is Myrcene synthase TPS5FN from Cannabis sativa (Hemp).